Here is a 367-residue protein sequence, read N- to C-terminus: tRNA-specific 2-thiouridylase MnmA (367 aa).

ATP contacts are provided by residues 13–20 and Met39; that span reads GLSGGVDS. The interval 99–101 is interaction with target base in tRNA; that stretch reads NPD. Residue Cys104 is the Nucleophile of the active site. Cys104 and Cys200 are joined by a disulfide. Gly128 contributes to the ATP binding site. Positions 150–152 are interaction with tRNA; sequence KDQ. Residue Cys200 is the Cysteine persulfide intermediate of the active site. The segment at 307–308 is interaction with tRNA; it reads RY.

Belongs to the MnmA/TRMU family.

The protein localises to the cytoplasm. It carries out the reaction S-sulfanyl-L-cysteinyl-[protein] + uridine(34) in tRNA + AH2 + ATP = 2-thiouridine(34) in tRNA + L-cysteinyl-[protein] + A + AMP + diphosphate + H(+). In terms of biological role, catalyzes the 2-thiolation of uridine at the wobble position (U34) of tRNA, leading to the formation of s(2)U34. This is tRNA-specific 2-thiouridylase MnmA from Neisseria gonorrhoeae (strain ATCC 700825 / FA 1090).